The chain runs to 309 residues: HPr kinase/phosphorylase (309 aa).

Catalysis depends on residues histidine 138 and lysine 159. Residue 153-160 (GDSGIGKS) coordinates ATP. Serine 160 is a binding site for Mg(2+). The Proton acceptor; for phosphorylation activity. Proton donor; for dephosphorylation activity role is filled by aspartate 177. Positions 201–210 (LEIRGVGIID) are important for the catalytic mechanism of both phosphorylation and dephosphorylation. Glutamate 202 is a binding site for Mg(2+). The active site involves arginine 243. The tract at residues 264-269 (PVKTGR) is important for the catalytic mechanism of dephosphorylation.

It belongs to the HPrK/P family. Homohexamer. Mg(2+) is required as a cofactor.

The catalysed reaction is [HPr protein]-L-serine + ATP = [HPr protein]-O-phospho-L-serine + ADP + H(+). It carries out the reaction [HPr protein]-O-phospho-L-serine + phosphate + H(+) = [HPr protein]-L-serine + diphosphate. Functionally, catalyzes the ATP- as well as the pyrophosphate-dependent phosphorylation of a specific serine residue in HPr, a phosphocarrier protein of the phosphoenolpyruvate-dependent sugar phosphotransferase system (PTS). HprK/P also catalyzes the pyrophosphate-producing, inorganic phosphate-dependent dephosphorylation (phosphorolysis) of seryl-phosphorylated HPr (P-Ser-HPr). The two antagonistic activities of HprK/P are regulated by several intracellular metabolites, which change their concentration in response to the absence or presence of rapidly metabolisable carbon sources (glucose, fructose, etc.) in the growth medium. Therefore, by controlling the phosphorylation state of HPr, HPrK/P is a sensor enzyme that plays a major role in the regulation of carbon metabolism and sugar transport: it mediates carbon catabolite repression (CCR), and regulates PTS-catalyzed carbohydrate uptake and inducer exclusion. This is HPr kinase/phosphorylase from Streptococcus thermophilus (strain ATCC BAA-250 / LMG 18311).